The primary structure comprises 423 residues: T-box protein 2 (423 aa).

The segment at residues 70–243 (LWQQFSQCGT…NNPFAKGFRD (174 aa)) is a DNA-binding region (T-box). 2 disordered regions span residues 238–324 (AKGF…PLRS) and 384–423 (VEAT…LSKP). Residues 261-283 (DATQSPPGKTASLPTHSPHPSES) are compositionally biased toward polar residues. A compositionally biased stretch (low complexity) spans 302–317 (TPTTSSLSTSTTPTLS). Residues 394 to 404 (AEKPEVKKEQK) show a composition bias toward basic and acidic residues.

In terms of processing, sumoylated. In terms of tissue distribution, expressed in body wall muscles and a subset of pharyngeal neurons. Expressed in head neurons and occassionally tail neurons. Not expressed in the pharynx.

Its subcellular location is the nucleus. Involved in the transcriptional regulation of genes required for the development of pharyngeal muscles derived from the ABa lineage. Acts as a transcriptional repressor and binds to T-box binding sites in its own promoter to negatively autoregulate its own expression in neurons, seam cells and the gut in order to restrict its expression to certain tissues. May function together with the nfya-1-NF-Y complex to repress its own expression. Plays a role in neural fate specification in the hermaphrodite-specific neuron (HSN)/PHB neuron lineage, acting in concert with homeobox protein egl-5 and the asymmetric cell division protein ham-1. This Caenorhabditis elegans protein is T-box protein 2.